Consider the following 269-residue polypeptide: Tryptophan synthase alpha chain (269 aa).

Residues Glu-45 and Asp-56 each act as proton acceptor in the active site.

It belongs to the TrpA family. As to quaternary structure, tetramer of two alpha and two beta chains.

The catalysed reaction is (1S,2R)-1-C-(indol-3-yl)glycerol 3-phosphate + L-serine = D-glyceraldehyde 3-phosphate + L-tryptophan + H2O. The protein operates within amino-acid biosynthesis; L-tryptophan biosynthesis; L-tryptophan from chorismate: step 5/5. Its function is as follows. The alpha subunit is responsible for the aldol cleavage of indoleglycerol phosphate to indole and glyceraldehyde 3-phosphate. In Shouchella clausii (strain KSM-K16) (Alkalihalobacillus clausii), this protein is Tryptophan synthase alpha chain.